A 509-amino-acid polypeptide reads, in one-letter code: Maturase K (509 aa).

It belongs to the intron maturase 2 family. MatK subfamily.

It is found in the plastid. The protein localises to the chloroplast. In terms of biological role, usually encoded in the trnK tRNA gene intron. Probably assists in splicing its own and other chloroplast group II introns. The chain is Maturase K from Chamaecyparis obtusa (Hinoki false-cypress).